Consider the following 219-residue polypeptide: Cytidylate kinase (219 aa).

21-29 is an ATP binding site; it reads GPAASGKGT.

This sequence belongs to the cytidylate kinase family. Type 1 subfamily.

It localises to the cytoplasm. The catalysed reaction is CMP + ATP = CDP + ADP. The enzyme catalyses dCMP + ATP = dCDP + ADP. This chain is Cytidylate kinase, found in Rickettsia africae (strain ESF-5).